The chain runs to 262 residues: Phosphatidylserine decarboxylase proenzyme (262 aa).

Residues Asp-86, His-142, and Ser-226 each act as charge relay system; for autoendoproteolytic cleavage activity in the active site. Catalysis depends on Ser-226, which acts as the Schiff-base intermediate with substrate; via pyruvic acid; for decarboxylase activity. Pyruvic acid (Ser); by autocatalysis is present on Ser-226.

Belongs to the phosphatidylserine decarboxylase family. PSD-B subfamily. Prokaryotic type I sub-subfamily. As to quaternary structure, heterodimer of a large membrane-associated beta subunit and a small pyruvoyl-containing alpha subunit. Pyruvate serves as cofactor. Is synthesized initially as an inactive proenzyme. Formation of the active enzyme involves a self-maturation process in which the active site pyruvoyl group is generated from an internal serine residue via an autocatalytic post-translational modification. Two non-identical subunits are generated from the proenzyme in this reaction, and the pyruvate is formed at the N-terminus of the alpha chain, which is derived from the carboxyl end of the proenzyme. The autoendoproteolytic cleavage occurs by a canonical serine protease mechanism, in which the side chain hydroxyl group of the serine supplies its oxygen atom to form the C-terminus of the beta chain, while the remainder of the serine residue undergoes an oxidative deamination to produce ammonia and the pyruvoyl prosthetic group on the alpha chain. During this reaction, the Ser that is part of the protease active site of the proenzyme becomes the pyruvoyl prosthetic group, which constitutes an essential element of the active site of the mature decarboxylase.

The protein localises to the cell membrane. The catalysed reaction is a 1,2-diacyl-sn-glycero-3-phospho-L-serine + H(+) = a 1,2-diacyl-sn-glycero-3-phosphoethanolamine + CO2. It functions in the pathway phospholipid metabolism; phosphatidylethanolamine biosynthesis; phosphatidylethanolamine from CDP-diacylglycerol: step 2/2. In terms of biological role, catalyzes the formation of phosphatidylethanolamine (PtdEtn) from phosphatidylserine (PtdSer). This Bacillus anthracis protein is Phosphatidylserine decarboxylase proenzyme.